A 295-amino-acid chain; its full sequence is tRNA pseudouridine synthase B (295 aa).

Asp42 acts as the Nucleophile in catalysis.

This sequence belongs to the pseudouridine synthase TruB family. Type 1 subfamily.

The catalysed reaction is uridine(55) in tRNA = pseudouridine(55) in tRNA. Functionally, responsible for synthesis of pseudouridine from uracil-55 in the psi GC loop of transfer RNAs. The protein is tRNA pseudouridine synthase B of Cutibacterium acnes (strain DSM 16379 / KPA171202) (Propionibacterium acnes).